We begin with the raw amino-acid sequence, 283 residues long: Acetyl-coenzyme A carboxylase carboxyl transferase subunit beta (283 aa).

The CoA carboxyltransferase N-terminal domain occupies 23–283 (LWIKCPSCSE…DFLMAGKAAA (261 aa)). Zn(2+) is bound by residues Cys-27, Cys-30, Cys-46, and Cys-49. The segment at 27–49 (CPSCSEMLFTKEYEDNLSVCPHC) adopts a C4-type zinc-finger fold.

It belongs to the AccD/PCCB family. In terms of assembly, acetyl-CoA carboxylase is a heterohexamer composed of biotin carboxyl carrier protein (AccB), biotin carboxylase (AccC) and two subunits each of ACCase subunit alpha (AccA) and ACCase subunit beta (AccD). Zn(2+) is required as a cofactor.

The protein resides in the cytoplasm. It carries out the reaction N(6)-carboxybiotinyl-L-lysyl-[protein] + acetyl-CoA = N(6)-biotinyl-L-lysyl-[protein] + malonyl-CoA. It participates in lipid metabolism; malonyl-CoA biosynthesis; malonyl-CoA from acetyl-CoA: step 1/1. In terms of biological role, component of the acetyl coenzyme A carboxylase (ACC) complex. Biotin carboxylase (BC) catalyzes the carboxylation of biotin on its carrier protein (BCCP) and then the CO(2) group is transferred by the transcarboxylase to acetyl-CoA to form malonyl-CoA. The protein is Acetyl-coenzyme A carboxylase carboxyl transferase subunit beta of Novosphingobium aromaticivorans (strain ATCC 700278 / DSM 12444 / CCUG 56034 / CIP 105152 / NBRC 16084 / F199).